The primary structure comprises 556 residues: Urocanate hydratase (556 aa).

NAD(+) contacts are provided by residues 52–53 (GG), Gln130, 176–178 (GMG), Glu196, Arg201, 242–243 (NA), 263–267 (QTSAH), 273–274 (YL), and Tyr322. Cys410 is an active-site residue. Gly492 is an NAD(+) binding site.

Belongs to the urocanase family. Requires NAD(+) as cofactor.

It is found in the cytoplasm. The catalysed reaction is 4-imidazolone-5-propanoate = trans-urocanate + H2O. The protein operates within amino-acid degradation; L-histidine degradation into L-glutamate; N-formimidoyl-L-glutamate from L-histidine: step 2/3. In terms of biological role, catalyzes the conversion of urocanate to 4-imidazolone-5-propionate. This is Urocanate hydratase from Shewanella sp. (strain MR-7).